Consider the following 692-residue polypeptide: Glycogen phosphorylase (692 aa).

Lys586 is modified (N6-(pyridoxal phosphate)lysine).

This sequence belongs to the glycogen phosphorylase family. It depends on pyridoxal 5'-phosphate as a cofactor.

It carries out the reaction [(1-&gt;4)-alpha-D-glucosyl](n) + phosphate = [(1-&gt;4)-alpha-D-glucosyl](n-1) + alpha-D-glucose 1-phosphate. Functionally, phosphorylase is an important allosteric enzyme in carbohydrate metabolism. Enzymes from different sources differ in their regulatory mechanisms and in their natural substrates. However, all known phosphorylases share catalytic and structural properties. The protein is Glycogen phosphorylase (glgP) of Aquifex aeolicus (strain VF5).